Here is a 220-residue protein sequence, read N- to C-terminus: Ribosomal RNA large subunit methyltransferase E (220 aa).

S-adenosyl-L-methionine is bound by residues Gly60, Trp62, Asp92, Asp108, and Asp133. Lys173 acts as the Proton acceptor in catalysis. Residues 195–220 (APRKPKASRDKSSETFILGRHLKQPR) form a disordered region.

This sequence belongs to the class I-like SAM-binding methyltransferase superfamily. RNA methyltransferase RlmE family.

Its subcellular location is the cytoplasm. The enzyme catalyses uridine(2552) in 23S rRNA + S-adenosyl-L-methionine = 2'-O-methyluridine(2552) in 23S rRNA + S-adenosyl-L-homocysteine + H(+). In terms of biological role, specifically methylates the uridine in position 2552 of 23S rRNA at the 2'-O position of the ribose in the fully assembled 50S ribosomal subunit. This is Ribosomal RNA large subunit methyltransferase E from Burkholderia pseudomallei (strain 1710b).